The following is a 382-amino-acid chain: Pyrimidine monooxygenase RutA (382 aa).

FMN contacts are provided by residues 68-69 (IK), Asn134, Glu143, 159-160 (RY), and Ser209.

This sequence belongs to the NtaA/SnaA/DszA monooxygenase family. RutA subfamily.

The enzyme catalyses uracil + FMNH2 + NADH + O2 = (Z)-3-ureidoacrylate + FMN + NAD(+) + H2O + H(+). The catalysed reaction is thymine + FMNH2 + NADH + O2 = (Z)-2-methylureidoacrylate + FMN + NAD(+) + H2O + H(+). Its function is as follows. Catalyzes the pyrimidine ring opening between N-3 and C-4 by an unusual flavin hydroperoxide-catalyzed mechanism, adding oxygen atoms in the process to yield ureidoacrylate peracid, that immediately reacts with FMN forming ureidoacrylate and FMN-N(5)-oxide. The FMN-N(5)-oxide reacts spontaneously with NADH to produce FMN. Requires the flavin reductase RutF to regenerate FMN in vivo. The sequence is that of Pyrimidine monooxygenase RutA from Escherichia coli (strain 55989 / EAEC).